Consider the following 331-residue polypeptide: Glycerol-3-phosphate dehydrogenase [NAD(P)+] (331 aa).

Positions 11, 12, 32, and 106 each coordinate NADPH. Lys-106, Gly-134, and Ser-136 together coordinate sn-glycerol 3-phosphate. Ala-138 contacts NADPH. Sn-glycerol 3-phosphate-binding residues include Lys-189, Asp-242, Ser-252, Arg-253, and Asn-254. Lys-189 (proton acceptor) is an active-site residue. Arg-253 contacts NADPH. NADPH is bound by residues Val-277 and Glu-279.

Belongs to the NAD-dependent glycerol-3-phosphate dehydrogenase family.

Its subcellular location is the cytoplasm. It carries out the reaction sn-glycerol 3-phosphate + NAD(+) = dihydroxyacetone phosphate + NADH + H(+). The catalysed reaction is sn-glycerol 3-phosphate + NADP(+) = dihydroxyacetone phosphate + NADPH + H(+). The protein operates within membrane lipid metabolism; glycerophospholipid metabolism. Catalyzes the reduction of the glycolytic intermediate dihydroxyacetone phosphate (DHAP) to sn-glycerol 3-phosphate (G3P), the key precursor for phospholipid synthesis. The chain is Glycerol-3-phosphate dehydrogenase [NAD(P)+] from Clostridium perfringens (strain ATCC 13124 / DSM 756 / JCM 1290 / NCIMB 6125 / NCTC 8237 / Type A).